Reading from the N-terminus, the 2541-residue chain is Talin-1 (2541 aa).

The FERM domain occupies 86–403; the sequence is RPLKIRMLDG…GYIDIILKKK (318 aa). At T167 the chain carries Phosphothreonine. Residues 280–435 form an interaction with LAYN region; it reads FQAHKNCGQM…PKKSTVLQQQ (156 aa). 5 positions are modified to phosphoserine: S405, S425, S446, S620, and S729. The tract at residues 482-655 is helical bundle R1; it reads RGHMPPLTSA…QASGELLQQI (174 aa). Residues 656–786 are helical bundle R2; the sequence is GESDTDPHFQ…ALNELLQHVK (131 aa). Residues 787–911 are helical bundle R3; the sequence is AHATGAGPAG…NAAAQNAIKK (125 aa). Residues 913–1044 are helical bundle R4; sequence LVQRLEHAAK…RTAAQKAQEA (132 aa). S1021 carries the post-translational modification Phosphoserine. Residues 1046 to 1206 are helical bundle R5; that stretch reads GPLEMDSALS…NRCVSCLPGQ (161 aa). Y1116 carries the phosphotyrosine modification. Position 1142 is a phosphothreonine (T1142). A phosphoserine mark is found at S1201 and S1225. The segment at 1207–1357 is helical bundle R6; it reads RDVDNALRAV…QLITMCTQQA (151 aa). T1263 bears the Phosphothreonine mark. S1323 is modified (phosphoserine). The interval 1327 to 1948 is interaction with SYNM; sequence AAPNLKSQLA…CSPSDAYTKK (622 aa). Positions 1358–1453 are helical bundle R7A; that stretch reads PGQKECDNAL…AYLVGVSDPN (96 aa). Positions 1359–1659 are interaction with VCL and F-actin; the sequence is GQKECDNALR…SMRDKAPGQL (301 aa). The tract at residues 1461–1580 is helical bundle R8; it reads LVEPTQFARA…NLSAFASNPE (120 aa). K1544 is modified (N6-acetyllysine). Positions 1581 to 1653 are helical bundle R7B; that stretch reads FSSIPAQISP…IKKLITSMRD (73 aa). The segment at 1655–1822 is helical bundle R9; it reads APGQLECETA…TLNEAASAAG (168 aa). Residues 1823-1973 form a helical bundle R10 region; that stretch reads VVGGMVDSIT…VLAALQAGNR (151 aa). At S1849 the chain carries Phosphoserine. T1855 is modified (phosphothreonine). The residue at position 1878 (S1878) is a Phosphoserine. The interval 1974–2140 is helical bundle R11; that stretch reads GTQACITAAS…TVKAVEDEAT (167 aa). K2031 is modified (N6-acetyllysine). S2040 is modified (phosphoserine). K2115 bears the N6-acetyllysine mark. The segment at 2141–2294 is helical bundle R12; sequence KGTRALEATT…QAAEAMKGTE (154 aa). Residues 2293–2533 form the I/LWEQ domain; that stretch reads TEWVDPEDPT…QIRQQQYKFL (241 aa). Positions 2300 to 2482 are helical bundle R13; that stretch reads DPTVIAENEL…AAQKAAAFEE (183 aa).

In terms of assembly, part of a complex composed of THSD1, PTK2/FAK1, TLN1 and VCL. Interacts with THSD1; this promotes interaction with PTK2/FAK1 and VCL. Binds with high affinity to VCL and with low affinity to integrins. Interacts with APBB1IP; this inhibits VCL binding. Interacts with PTK2/FAK1. Interacts with PIP5K1C and NRAP. Interacts with LAYN. Interacts with SYNM. Interacts with ITGB1; the interaction is prevented by competitive binding of ITGB1BP1. Interacts with SVEP1. Interacts (via R7 domain) with KANK1 or KANK2 (via KN motif); this interaction likely initiates the assembly of cortical microtubule stabilization complexes (CMSCs) at the vicinity of focal adhesions. As to quaternary structure, interacts with VCL; shows reduced VCL binding compared to isoform 2. Interacts with APBB1IP; shows similar level of binding compared to isoform 2. Interacts with VCL; shows enhanced VCL binding compared to isoform 1. Interacts with APBB1IP; shows similar level of binding compared to isoform 1. In terms of assembly, (Microbial infection) Interacts with human cytomegalovirus protein UL135. Expressed at low to non-detectable levels in many tissues but highly expressed in skin and pancreas with other tissues including kidney cortex, endocervix, testis, pituitary, liver, and spleen also showing robust expression.

The protein resides in the cell projection. It localises to the ruffle membrane. The protein localises to the cytoplasm. Its subcellular location is the cytoskeleton. It is found in the cell surface. The protein resides in the cell junction. It localises to the focal adhesion. In terms of biological role, high molecular weight cytoskeletal protein concentrated at regions of cell-matrix and cell-cell contacts. Involved in connections of major cytoskeletal structures to the plasma membrane. With KANK1 co-organize the assembly of cortical microtubule stabilizing complexes (CMSCs) positioned to control microtubule-actin crosstalk at focal adhesions (FAs) rims. The chain is Talin-1 (TLN1) from Homo sapiens (Human).